Consider the following 198-residue polypeptide: MTDIFIYPQANLIAGVDEVGRGPLVGAVVTAAVILDPKRPIVGLADSKKLSEKRRLSLYDEITDKALSWSLGRAEPEEIDQLNILHATMLAMQRAVAGLHIAPDYVLIDGNRCPKLAMPSLAVVKGDSRVAEISAASILAKVTRDREMTELDLQFPEYGFAQHKGYPTAVHLEKLTTFGATEHHRRSFGPVKRVLGLV.

In terms of domain architecture, RNase H type-2 spans 11-198 (NLIAGVDEVG…GPVKRVLGLV (188 aa)). A divalent metal cation contacts are provided by Asp-17, Glu-18, and Asp-109.

It belongs to the RNase HII family. The cofactor is Mn(2+). Mg(2+) is required as a cofactor.

It localises to the cytoplasm. The catalysed reaction is Endonucleolytic cleavage to 5'-phosphomonoester.. Endonuclease that specifically degrades the RNA of RNA-DNA hybrids. The polypeptide is Ribonuclease HII (Yersinia enterocolitica serotype O:8 / biotype 1B (strain NCTC 13174 / 8081)).